The sequence spans 319 residues: N-acyl-aromatic-L-amino acid amidohydrolase (carboxylate-forming) (319 aa).

The segment at 1-210 (MCSLPVPREP…TVLDFIELFN (210 aa)) is hydrolytic domain. Zn(2+) is bound by residues His21 and Glu24. Residues Arg63 and 70 to 71 (NR) each bind substrate. His116 contacts Zn(2+). Residues Glu178 and Tyr288 each coordinate substrate. A shielding domain region spans residues 211–318 (QGTAFPAFEM…PALTPAPSPA (108 aa)).

Belongs to the AspA/AstE family. Aspartoacylase subfamily. In terms of assembly, exists as a mixture of homodimers and homotetramer, both catalytically active. As to quaternary structure, (Microbial infection) Interacts with hepatitis C virus/HCV core protein. Zn(2+) serves as cofactor.

It is found in the apical cell membrane. Its subcellular location is the cytoplasm. It catalyses the reaction an N-acyl-aromatic L-alpha-amino acid + H2O = an aromatic L-alpha-amino acid + a carboxylate. The catalysed reaction is an N-acetyl-L-cysteine-S-conjugate + H2O = an S-substituted L-cysteine + acetate. Functionally, plays an important role in deacetylating mercapturic acids in kidney proximal tubules. Also acts on N-acetyl-aromatic amino acids. The chain is N-acyl-aromatic-L-amino acid amidohydrolase (carboxylate-forming) (ACY3) from Homo sapiens (Human).